The primary structure comprises 343 residues: MSAFTPASEVLLRHSDDFEQSRILFAGDLQDDLPARLDTAASRAHTQQFHHWQVLSRQMGDNARFSLVATADDVADCDTLIYYWPKNKPEAQFQLMNLLSLLPVGTDIFVVGENRSGVRSAEQMLADYAPLNKVDSARRCGLYFGRLEKQPMFDADKFWGEYNVDGLTVKTLPGVFSRDGLDVGSQLLLSTLTPHTKGKVLDVGCGAGVLSVAFARHSPKIRLTLCDVSAPAVEASRATLAANGIEGEVFASNVFSEVKGRFDMIISNPPFHDGMQTSLDAAQTLIRGAVRHLNSGGELRIVANAFLPYPDVLDETFGFHEVIAQTGRFKVYRAIMTRQAKKG.

This sequence belongs to the methyltransferase superfamily. RsmC family. Monomer.

The protein resides in the cytoplasm. It carries out the reaction guanosine(1207) in 16S rRNA + S-adenosyl-L-methionine = N(2)-methylguanosine(1207) in 16S rRNA + S-adenosyl-L-homocysteine + H(+). Functionally, specifically methylates the guanine in position 1207 of 16S rRNA in the 30S particle. This is Ribosomal RNA small subunit methyltransferase C from Escherichia fergusonii (strain ATCC 35469 / DSM 13698 / CCUG 18766 / IAM 14443 / JCM 21226 / LMG 7866 / NBRC 102419 / NCTC 12128 / CDC 0568-73).